The primary structure comprises 465 residues: Ribosomal oxygenase 2 (465 aa).

The JmjC domain maps to glutamine 139–serine 271. Residues histidine 179, aspartate 181, and histidine 240 each coordinate Fe cation. Phosphoserine is present on serine 309.

Belongs to the ROX family. MINA53 subfamily. Fe(2+) serves as cofactor.

It is found in the nucleus. The protein localises to the nucleolus. The enzyme catalyses L-histidyl-[ribosomal protein uL15] + 2-oxoglutarate + O2 = (3S)-3-hydroxy-L-histidyl-[ribosomal protein uL15] + succinate + CO2. The catalysed reaction is L-histidyl-[protein] + 2-oxoglutarate + O2 = (3S)-3-hydroxy-L-histidyl-[protein] + succinate + CO2. In terms of biological role, oxygenase that can act as both a histone lysine demethylase and a ribosomal histidine hydroxylase. Is involved in the demethylation of trimethylated 'Lys-9' on histone H3 (H3K9me3), leading to an increase in ribosomal RNA expression. Also catalyzes the hydroxylation of 60S ribosomal protein L27a on 'His-39'. May play an important role in cell growth and survival. May be involved in ribosome biogenesis, most likely during the assembly process of pre-ribosomal particles. The polypeptide is Ribosomal oxygenase 2 (Rattus norvegicus (Rat)).